A 91-amino-acid chain; its full sequence is Large ribosomal subunit protein uL23c (91 aa).

It belongs to the universal ribosomal protein uL23 family. In terms of assembly, part of the 50S ribosomal subunit.

It is found in the plastid. Its subcellular location is the chloroplast. Functionally, binds to 23S rRNA. The chain is Large ribosomal subunit protein uL23c (rpl23) from Physcomitrium patens (Spreading-leaved earth moss).